The following is a 685-amino-acid chain: Probable glucan endo-1,3-beta-glucosidase btgC (685 aa).

Disordered stretches follow at residues 1-96, 119-168, and 180-202; these read MSGP…NLGP, GIDA…RDSY, and PAGQ…SPYQ. Residues 1–312 lie on the Cytoplasmic side of the membrane; it reads MSGPHRSFSF…PTPGGGSRKR (312 aa). Polar residues-rich tracts occupy residues 47-61 and 73-90; these read SARS…SSGF and GQNS…TTPG. A helical; Signal-anchor for type II membrane protein transmembrane segment spans residues 313–333; the sequence is GWIVGLALAFIVVGAIVGGAV. Residues 334 to 685 lie on the Extracellular side of the membrane; the sequence is GGTLGNRENE…IPDCGGKTAA (352 aa). The interval 335-369 is disordered; it reads GTLGNRENEAPDTTKSASSDTESNGDLNKDSSEIK. Over residues 345-360 the composition is skewed to polar residues; sequence PDTTKSASSDTESNGD. Residues N405, N428, and N456 are each glycosylated (N-linked (GlcNAc...) asparagine). Catalysis depends on E488, which acts as the Proton donor. The active-site Nucleophile is E587. N632 carries an N-linked (GlcNAc...) asparagine glycan.

Belongs to the glycosyl hydrolase 17 family.

Its subcellular location is the cell membrane. The catalysed reaction is Hydrolysis of (1-&gt;3)-beta-D-glucosidic linkages in (1-&gt;3)-beta-D-glucans.. Functionally, glucanases play a role in cell expansion during growth, in cell-cell fusion during mating, and in spore release during sporulation. This enzyme may be involved in beta-glucan degradation. Active on laminarin and lichenan. The chain is Probable glucan endo-1,3-beta-glucosidase btgC (btgC) from Aspergillus oryzae (strain ATCC 42149 / RIB 40) (Yellow koji mold).